The primary structure comprises 447 residues: Phosphoglucosamine mutase (447 aa).

Residue S102 is the Phosphoserine intermediate of the active site. The Mg(2+) site is built by S102, D241, D243, and D245. Phosphoserine is present on S102.

The protein belongs to the phosphohexose mutase family. Requires Mg(2+) as cofactor. Post-translationally, activated by phosphorylation.

It catalyses the reaction alpha-D-glucosamine 1-phosphate = D-glucosamine 6-phosphate. Catalyzes the conversion of glucosamine-6-phosphate to glucosamine-1-phosphate. The sequence is that of Phosphoglucosamine mutase from Pseudomonas syringae pv. tomato (strain ATCC BAA-871 / DC3000).